A 294-amino-acid chain; its full sequence is Cytidine deaminase (294 aa).

CMP/dCMP-type deaminase domains lie at 48 to 168 (DEDA…FGPK) and 186 to 294 (LTGD…VLLA). 89 to 91 (NME) serves as a coordination point for substrate. His102 is a binding site for Zn(2+). Residue Glu104 is the Proton donor of the active site. Zn(2+) contacts are provided by Cys129 and Cys132.

This sequence belongs to the cytidine and deoxycytidylate deaminase family. As to quaternary structure, homodimer. It depends on Zn(2+) as a cofactor.

It catalyses the reaction cytidine + H2O + H(+) = uridine + NH4(+). The catalysed reaction is 2'-deoxycytidine + H2O + H(+) = 2'-deoxyuridine + NH4(+). This enzyme scavenges exogenous and endogenous cytidine and 2'-deoxycytidine for UMP synthesis. This chain is Cytidine deaminase, found in Escherichia coli O7:K1 (strain IAI39 / ExPEC).